Consider the following 241-residue polypeptide: Triosephosphate isomerase (241 aa).

Asn-9–Lys-11 is a substrate binding site. His-96 functions as the Electrophile in the catalytic mechanism. Glu-165 serves as the catalytic Proton acceptor. Substrate is bound by residues Gly-171, Ser-204, and Gly-225–Gly-226.

The protein belongs to the triosephosphate isomerase family. In terms of assembly, homodimer.

The protein localises to the cytoplasm. It catalyses the reaction D-glyceraldehyde 3-phosphate = dihydroxyacetone phosphate. It functions in the pathway carbohydrate biosynthesis; gluconeogenesis. Its pathway is carbohydrate degradation; glycolysis; D-glyceraldehyde 3-phosphate from glycerone phosphate: step 1/1. Involved in the gluconeogenesis. Catalyzes stereospecifically the conversion of dihydroxyacetone phosphate (DHAP) to D-glyceraldehyde-3-phosphate (G3P). This is Triosephosphate isomerase from Prochlorococcus marinus (strain MIT 9301).